The primary structure comprises 90 residues: Small regulatory polypeptide of amino acid response (90 aa).

Over Met1–Thr18 the chain is Lumenal. A helical membrane pass occupies residues Ala19 to Cys39. Residues Cys40–Met90 are Cytoplasmic-facing.

As to quaternary structure, interacts with components of the lysosomal V-ATPase complex. Interacts with ATP6V0A1. Interacts with ATP6V0A2. Highly expressed in lung, heart and skeletal muscle.

The protein resides in the late endosome membrane. The protein localises to the lysosome membrane. Negative regulator of amino acid sensing and mTORC1, a signaling complex promoting cell growth in response to growth factors, energy levels and amino acids. Negatively regulates mTORC1 activation by inhibiting recruitment of mTORC1 to lysosomes upon stimulation with amino acids: acts by promoting the formation of a tightly bound supercomplex composed of the lysosomal V-ATPase, Ragulator and Rag GTPases, preventing recruitment of mTORC1. Acts as a regulator of muscle regeneration following injury by regulating mTORC1 activation. This is Small regulatory polypeptide of amino acid response from Homo sapiens (Human).